The primary structure comprises 98 residues: NADH-ubiquinone oxidoreductase chain 4L (98 aa).

Transmembrane regions (helical) follow at residues 2 to 22, 29 to 49, and 61 to 81; these read PSIS…MLIF, SLLC…LTIL, and ILLL…LVTV.

The protein belongs to the complex I subunit 4L family. As to quaternary structure, core subunit of respiratory chain NADH dehydrogenase (Complex I) which is composed of 45 different subunits.

It is found in the mitochondrion inner membrane. The catalysed reaction is a ubiquinone + NADH + 5 H(+)(in) = a ubiquinol + NAD(+) + 4 H(+)(out). Core subunit of the mitochondrial membrane respiratory chain NADH dehydrogenase (Complex I) which catalyzes electron transfer from NADH through the respiratory chain, using ubiquinone as an electron acceptor. Part of the enzyme membrane arm which is embedded in the lipid bilayer and involved in proton translocation. This chain is NADH-ubiquinone oxidoreductase chain 4L (MT-ND4L), found in Hapalemur aureus (Golden bamboo lemur).